The following is a 194-amino-acid chain: Ribonuclease HII (194 aa).

In terms of domain architecture, RNase H type-2 spans isoleucine 3–leucine 193. Aspartate 9, glutamate 10, and aspartate 101 together coordinate a divalent metal cation.

The protein belongs to the RNase HII family. The cofactor is Mn(2+). Mg(2+) serves as cofactor.

It is found in the cytoplasm. The enzyme catalyses Endonucleolytic cleavage to 5'-phosphomonoester.. In terms of biological role, endonuclease that specifically degrades the RNA of RNA-DNA hybrids. The protein is Ribonuclease HII of Neisseria meningitidis serogroup C / serotype 2a (strain ATCC 700532 / DSM 15464 / FAM18).